Consider the following 368-residue polypeptide: MKTLNSTPRADGFHMPAEWAPQTQVWMVWPERPDNWRLGGKPAQAAHVTLAKAIARFEPVTVAASAGQYENARRQLDQPNIRVVEISNDDAWVRDTGPTFVINGHGEVRGVDWGFNAWGGFDGGLYAPWNRDEELAAKVLEMERCQRYQTEGFVLEGGSIHVDGEGTVITTEECLLNRNRNPHLSREQIEAVLRDHLAVDTVVWLPDGLYNDETDGHVDNFCCYVRPGEVLLAWTDDSNDPNYARCHAAMDVLKNTRDAKGREFIVHKMPIPGPLYATAEECAGVDQVAGSQERDPSVRLAGSYVNFLIVNGGIIAPSFDDPADAEARAILARIFPDHEVVMIPGRELLLGGGNIHCLTQQQPAPVKR.

The Amidino-cysteine intermediate role is filled by C357.

It belongs to the agmatine deiminase family. In terms of assembly, homodimer.

The enzyme catalyses agmatine + H2O = N-carbamoylputrescine + NH4(+). It participates in amine and polyamine biosynthesis; putrescine biosynthesis via agmatine pathway; N-carbamoylputrescine from agmatine: step 1/1. Mediates the hydrolysis of agmatine into N-carbamoylputrescine in the arginine decarboxylase (ADC) pathway of putrescine biosynthesis, a basic polyamine. This Pseudomonas putida (strain ATCC 700007 / DSM 6899 / JCM 31910 / BCRC 17059 / LMG 24140 / F1) protein is Agmatine deiminase.